The sequence spans 335 residues: Leucine-rich repeat-containing protein 39 (335 aa).

Residues 10 to 47 (AVNAVKEVWEKRIKKLNEDLKREKEFQHKLVRIWEERV) are a coiled coil. LRR repeat units follow at residues 84 to 105 (QLQE…IGRF), 107 to 128 (NLIV…IGLL), 130 to 151 (RLQE…LSNC), 153 to 176 (SLEK…SNLL), 177 to 197 (KLTH…AVLN), 200 to 221 (ALEW…IERM), 223 to 244 (NLHT…ISNM), 246 to 267 (NLGT…MEEM), and 269 to 290 (NLRF…PPSE).

In terms of assembly, interacts with MYH7 (via C-terminus). In terms of tissue distribution, highly expressed in skeletal muscle and heart. Not detected in other tissues tested.

The protein localises to the cytoplasm. It localises to the myofibril. The protein resides in the sarcomere. Its subcellular location is the m line. In terms of biological role, component of the sarcomeric M-band which plays a role in myocyte response to biomechanical stress. May regulate expression of other M-band proteins via an SRF-dependent pathway. Important for normal contractile function in heart. This is Leucine-rich repeat-containing protein 39 (LRRC39) from Homo sapiens (Human).